A 204-amino-acid polypeptide reads, in one-letter code: Somatotropin (204 aa).

Residues 1–17 (MNSVVLQLSVVCLGVSS) form the signal peptide. Position 18 is a pyrrolidone carboxylic acid (Q18). Residue H36 coordinates Zn(2+). A disulfide bridge connects residues C69 and C177. A Zn(2+)-binding site is contributed by E186. Residues C194 and C202 are joined by a disulfide bond.

Belongs to the somatotropin/prolactin family.

Its subcellular location is the secreted. In terms of biological role, growth hormone plays an important role in growth control and involved in the regulation of several anabolic processes. The sequence is that of Somatotropin (gh) from Oreochromis mossambicus (Mozambique tilapia).